A 601-amino-acid polypeptide reads, in one-letter code: NADH-quinone oxidoreductase subunit C/D (601 aa).

The segment at methionine 1–glutamine 191 is NADH dehydrogenase I subunit C. The NADH dehydrogenase I subunit D stretch occupies residues aspartate 215–arginine 601.

The protein in the N-terminal section; belongs to the complex I 30 kDa subunit family. It in the C-terminal section; belongs to the complex I 49 kDa subunit family. NDH-1 is composed of 13 different subunits. Subunits NuoB, CD, E, F, and G constitute the peripheral sector of the complex.

It is found in the cell inner membrane. The enzyme catalyses a quinone + NADH + 5 H(+)(in) = a quinol + NAD(+) + 4 H(+)(out). Its function is as follows. NDH-1 shuttles electrons from NADH, via FMN and iron-sulfur (Fe-S) centers, to quinones in the respiratory chain. The immediate electron acceptor for the enzyme in this species is believed to be ubiquinone. Couples the redox reaction to proton translocation (for every two electrons transferred, four hydrogen ions are translocated across the cytoplasmic membrane), and thus conserves the redox energy in a proton gradient. This chain is NADH-quinone oxidoreductase subunit C/D, found in Aeromonas hydrophila subsp. hydrophila (strain ATCC 7966 / DSM 30187 / BCRC 13018 / CCUG 14551 / JCM 1027 / KCTC 2358 / NCIMB 9240 / NCTC 8049).